The sequence spans 340 residues: Organic solute transporter subunit alpha (340 aa).

Residues 1–52 lie on the Extracellular side of the membrane; the sequence is MEPDRTQIRLDPRYTADLLEILKTNYSVPSACFSYPPTAAQLLRALGPVDIS. The N-linked (GlcNAc...) asparagine glycan is linked to Asn25. A helical membrane pass occupies residues 53–73; sequence LMVIMTLFVLGSIAIFLEAAV. Topologically, residues 74 to 87 are cytoplasmic; sequence YLHKNTRCPIKRKT. Residues 88–108 traverse the membrane as a helical segment; the sequence is LIWCSSSPTIVSAFSCFGLWI. Over 109–110 the chain is Extracellular; that stretch reads PR. Residues 111–131 form a helical membrane-spanning segment; that stretch reads ALTLVEMAITTFYSMCFYLLM. The Cytoplasmic segment spans residues 132–186; the sequence is QAMVEGFGGKEAVLRTLKDTPVMIHTGPCCCCCPCCPRIKITRKRLQLLLLGPIQ. Residues 187-207 traverse the membrane as a helical segment; that stretch reads YAFFKISLTLVGLFLIPDGIF. The Extracellular segment spans residues 208 to 219; it reads DPSDISEGSTAL. Residues 220 to 240 form a helical membrane-spanning segment; it reads WINTFLGVSTLSALWTIGIIF. Residues 241–255 lie on the Cytoplasmic side of the membrane; that stretch reads RQARLHLGEQNIGAK. A helical membrane pass occupies residues 256–276; sequence FVLFQALLILSALQPSIFSVL. Over 277 to 295 the chain is Extracellular; it reads ASGGQIACSPPFSSKIRSQ. The chain crosses the membrane as a helical span at residues 296-316; sequence VMNCHLLILESFLITVLTRIY. The Cytoplasmic portion of the chain corresponds to 317–340; sequence YRRKDDKLGYEPFSSPDQDLNLKA. Ser330 carries the phosphoserine modification.

This sequence belongs to the OST-alpha family. In terms of assembly, interacts with SLC51B. The Ost-alpha/Ost-beta complex is a heterodimer composed of alpha (SLC51A) and beta (SLC51B) subunit.

It localises to the cell membrane. The protein localises to the endoplasmic reticulum membrane. It carries out the reaction taurocholate(out) = taurocholate(in). The enzyme catalyses estrone 3-sulfate(out) = estrone 3-sulfate(in). It catalyses the reaction dehydroepiandrosterone 3-sulfate(out) = dehydroepiandrosterone 3-sulfate(in). The catalysed reaction is tauroursodeoxycholate(out) = tauroursodeoxycholate(in). It carries out the reaction glycoursodeoxycholate(out) = glycoursodeoxycholate(in). The enzyme catalyses glycocholate(out) = glycocholate(in). It catalyses the reaction taurochenodeoxycholate(out) = taurochenodeoxycholate(in). The catalysed reaction is glycochenodeoxycholate(out) = glycochenodeoxycholate(in). It carries out the reaction taurodeoxycholate(out) = taurodeoxycholate(in). The enzyme catalyses glycodeoxycholate(out) = glycodeoxycholate(in). It catalyses the reaction prostaglandin E2(out) = prostaglandin E2(in). Essential component of the Ost-alpha/Ost-beta complex, a heterodimer that acts as the intestinal basolateral transporter responsible for bile acid export from enterocytes into portal blood. Efficiently transports the major species of bile acids (taurocholate). Taurine conjugates are transported more efficiently across the basolateral membrane than glycine-conjugated bile acids. Can also transport steroids such as estrone 3-sulfate and dehydroepiandrosterone 3-sulfate, therefore playing a role in the enterohepatic circulation of sterols. Able to transport eicosanoids such as prostaglandin E2. The sequence is that of Organic solute transporter subunit alpha (SLC51A) from Bos taurus (Bovine).